The primary structure comprises 209 residues: ATP-dependent Clp protease proteolytic subunit (209 aa).

Ser-103 serves as the catalytic Nucleophile. His-128 is an active-site residue.

It belongs to the peptidase S14 family. As to quaternary structure, fourteen ClpP subunits assemble into 2 heptameric rings which stack back to back to give a disk-like structure with a central cavity, resembling the structure of eukaryotic proteasomes.

It is found in the cytoplasm. The enzyme catalyses Hydrolysis of proteins to small peptides in the presence of ATP and magnesium. alpha-casein is the usual test substrate. In the absence of ATP, only oligopeptides shorter than five residues are hydrolyzed (such as succinyl-Leu-Tyr-|-NHMec, and Leu-Tyr-Leu-|-Tyr-Trp, in which cleavage of the -Tyr-|-Leu- and -Tyr-|-Trp bonds also occurs).. Its function is as follows. Cleaves peptides in various proteins in a process that requires ATP hydrolysis. Has a chymotrypsin-like activity. Plays a major role in the degradation of misfolded proteins. This Lawsonia intracellularis (strain PHE/MN1-00) protein is ATP-dependent Clp protease proteolytic subunit.